A 106-amino-acid chain; its full sequence is UPF0091 protein RC0354 (106 aa).

The protein belongs to the UPF0091 family.

In Rickettsia conorii (strain ATCC VR-613 / Malish 7), this protein is UPF0091 protein RC0354.